We begin with the raw amino-acid sequence, 869 residues long: Facilitated trehalose transporter Tret1 (869 aa).

Disordered stretches follow at residues 1–214 (MSGR…QKAT) and 258–315 (KESS…LIHR). At 1–404 (MSGRDNRGAG…VYRPTTNPIY (404 aa)) the chain is on the cytoplasmic side. The span at 25–43 (KLKEKLTRAGDDQGYHRVE) shows a compositional bias: basic and acidic residues. Low complexity-rich tracts occupy residues 44 to 57 (SNLS…SLDT), 79 to 92 (PQQQ…QQLR), and 118 to 127 (PFQQQQQRTP). 2 stretches are compositionally biased toward basic and acidic residues: residues 147–156 (EIREHRDRQQ) and 258–291 (KESS…KLDK). A phosphoserine mark is found at Ser-260, Ser-261, Ser-262, Ser-332, and Ser-334. Residues 336–368 (EDFHTSRQHFQQQRSISTDSRKSRRPYEMDEMG) are disordered. The segment covering 343 to 353 (QHFQQQRSIST) has biased composition (polar residues). The span at 354-368 (DSRKSRRPYEMDEMG) shows a compositional bias: basic and acidic residues. A helical transmembrane segment spans residues 405–425 (IWTQVLAALSVSLGSLVVGFV). Topologically, residues 426-452 (SAYTSPALVSMTNRNMTSFEVTPQAAS) are extracellular. An N-linked (GlcNAc...) asparagine glycan is attached at Asn-440. A helical membrane pass occupies residues 453–473 (WVGGIMPLAGLAGGIAGGPFI). The Cytoplasmic portion of the chain corresponds to 474 to 485 (EYLGRRNTILAT). A helical membrane pass occupies residues 486–506 (AIPFIVSSLLIACAVNVAMVL). Over 507-509 (AGR) the chain is Extracellular. Residues 510 to 530 (FLAGFCVGIASLSLPVYLGET) traverse the membrane as a helical segment. At 531–536 (VQPEVR) the chain is on the cytoplasmic side. The chain crosses the membrane as a helical span at residues 537–557 (GTLGLLPTAFGNIGILLCFVA). At 558–564 (GTYMDWS) the chain is on the extracellular side. A helical membrane pass occupies residues 565 to 585 (MLAFLGAALPVPFLILMFLIP). Residues 586 to 654 (ETPRWFVSRG…NLKPLSISLG (69 aa)) lie on the Cytoplasmic side of the membrane. Residues 655–675 (LMFFQQLSGINAVIFYTVSIF) form a helical membrane-spanning segment. Residues 676–685 (KDAGSTIDGN) are Extracellular-facing. The helical transmembrane segment at 686-706 (LCTIIVGIVNFMATFIATLLI) threads the bilayer. Residues 707–712 (DRAGRK) are Cytoplasmic-facing. The chain crosses the membrane as a helical span at residues 713–733 (ILLYVSNIAMIITLFVLGGFF). Topologically, residues 734 to 752 (YCKSHGQDVSQLGWLPLSC) are extracellular. A helical membrane pass occupies residues 753 to 773 (FVIYILGFSLGFGPIPWLMMG). At 774–779 (EILPSK) the chain is on the cytoplasmic side. Residues 780–800 (IRGSAASVATAFNWSCTFVVT) traverse the membrane as a helical segment. Over 801–813 (KTFQDMIDFMGAH) the chain is Extracellular. Residues 814-834 (GAFWLFGSICFIGLFFVILYV) form a helical membrane-spanning segment. Residues 835 to 869 (PETQGKTLEDIERKMMGRVRRMSSVANMKPLAFNM) are Cytoplasmic-facing. Phosphoserine occurs at positions 857 and 858.

The protein belongs to the major facilitator superfamily. Sugar transporter (TC 2.A.1.1) family. Trehalose transporter subfamily.

The protein resides in the cell membrane. Its function is as follows. Low-capacity facilitative transporter for trehalose. Does not transport maltose, sucrose or lactose. Mediates the bidirectional transfer of trehalose. Responsible for the transport of trehalose synthesized in the fat body and the incorporation of trehalose into other tissues that require a carbon source, thereby regulating trehalose levels in the hemolymph. The polypeptide is Facilitated trehalose transporter Tret1 (Drosophila persimilis (Fruit fly)).